The primary structure comprises 60 residues: Homeobox protein engrailed-like (60 aa).

The segment at residues 1 to 41 (GEQLCRLRAEFQASRYLTEERRTALARELRLNEAQIKIWFQ) is a DNA-binding region (homeobox).

Belongs to the engrailed homeobox family.

The protein localises to the nucleus. The protein is Homeobox protein engrailed-like of Lampetra planeri (Brook lamprey).